The following is an 88-amino-acid chain: Phosphocarrier protein HPr (88 aa).

Residues 1 to 88 (MVVKTVRVLN…RLFQNKFEEE (88 aa)) enclose the HPr domain. His15 acts as the Pros-phosphohistidine intermediate in catalysis. Residue Ser46 is modified to Phosphoserine; by HPrK/P.

This sequence belongs to the HPr family.

The protein resides in the cytoplasm. With respect to regulation, phosphorylation on Ser-46 inhibits the phosphoryl transfer from enzyme I to HPr. General (non sugar-specific) component of the phosphoenolpyruvate-dependent sugar phosphotransferase system (sugar PTS). This major carbohydrate active-transport system catalyzes the phosphorylation of incoming sugar substrates concomitantly with their translocation across the cell membrane. The phosphoryl group from phosphoenolpyruvate (PEP) is transferred to the phosphoryl carrier protein HPr by enzyme I. Phospho-HPr then transfers it to the PTS EIIA domain. This Treponema pallidum (strain Nichols) protein is Phosphocarrier protein HPr (ptsH).